The sequence spans 569 residues: Santalene synthase (569 aa).

The (2E)-geranyl diphosphate site is built by Arg284, Asp321, Asp325, and Arg460. Mg(2+) contacts are provided by Asp321 and Asp325. Residues 321–325 carry the DDXXD motif motif; it reads DDAYD. Mg(2+)-binding residues include Asn463, Thr467, and Glu471.

It belongs to the terpene synthase family. Tpsb subfamily. Mg(2+) serves as cofactor. Mn(2+) is required as a cofactor.

It carries out the reaction (2E,6E)-farnesyl diphosphate = (1S,5S,6R)-alpha-bergamotene + diphosphate. The catalysed reaction is (2E,6E)-farnesyl diphosphate = (+)-alpha-santalene + diphosphate. The enzyme catalyses (2E,6E)-farnesyl diphosphate = (-)-beta-santalene + diphosphate. Functionally, catalyzes a mixture of sesquiterpenoids from (2E,6E)-farnesyl diphosphate in fragrance biosynthesis. Catalyzes the formation of alpha-santalene, beta-santalene, epi-beta-santalene and exo-alpha-bergamotene, as well as traces of alpha-farnesene and beta-farnesene. The polypeptide is Santalene synthase (Santalum austrocaledonicum (Sandalwood)).